Reading from the N-terminus, the 289-residue chain is 4-diphosphocytidyl-2-C-methyl-D-erythritol kinase (289 aa).

Lysine 10 is an active-site residue. Proline 94–serine 104 lines the ATP pocket. Residue aspartate 136 is part of the active site.

Belongs to the GHMP kinase family. IspE subfamily.

The enzyme catalyses 4-CDP-2-C-methyl-D-erythritol + ATP = 4-CDP-2-C-methyl-D-erythritol 2-phosphate + ADP + H(+). Its pathway is isoprenoid biosynthesis; isopentenyl diphosphate biosynthesis via DXP pathway; isopentenyl diphosphate from 1-deoxy-D-xylulose 5-phosphate: step 3/6. In terms of biological role, catalyzes the phosphorylation of the position 2 hydroxy group of 4-diphosphocytidyl-2C-methyl-D-erythritol. This is 4-diphosphocytidyl-2-C-methyl-D-erythritol kinase from Bacillus anthracis (strain CDC 684 / NRRL 3495).